Reading from the N-terminus, the 454-residue chain is Histidine--tRNA ligase (454 aa).

It belongs to the class-II aminoacyl-tRNA synthetase family. Homodimer.

The protein resides in the cytoplasm. The catalysed reaction is tRNA(His) + L-histidine + ATP = L-histidyl-tRNA(His) + AMP + diphosphate + H(+). This chain is Histidine--tRNA ligase, found in Phocaeicola vulgatus (strain ATCC 8482 / DSM 1447 / JCM 5826 / CCUG 4940 / NBRC 14291 / NCTC 11154) (Bacteroides vulgatus).